The primary structure comprises 235 residues: uncharacterized protein (235 aa).

Residues 1–24 form the signal peptide; the sequence is MSDRMKLKGLLAFCLLFLSSFVLA.

This is an uncharacterized protein from Haemophilus influenzae (strain ATCC 51907 / DSM 11121 / KW20 / Rd).